A 160-amino-acid polypeptide reads, in one-letter code: MKSLQKGFTLIELMIVVAIIGILAAIAIPQYQNYIARSQVSRVMSETGQMRTAIETCLLDGKKADECFIGWTKSNLLGASGSPSSSNDSTADHPGQGGLVIDYKLEADATNAITATFGQNAAATLHGKALKWTRDPKATWSCSTDVELKFRPTGCKDDLK.

A propeptide spans 1–7 (leader sequence); sequence MKSLQKG. F8 carries the post-translational modification N-methylphenylalanine. A helical membrane pass occupies residues 8 to 28; sequence FTLIELMIVVAIIGILAAIAI.

This sequence belongs to the N-Me-Phe pilin family. As to quaternary structure, the pili are polar flexible filaments of about 5.4 nanometers diameter and 2.5 micrometers average length; they consist of only a single polypeptide chain arranged in a helical configuration of five subunits per turn in the assembled pilus.

The protein resides in the fimbrium. It is found in the membrane. Major component of the type IV fimbriae that plays an essential role in twitching motility, natural transformation, and protease secretion. The sequence is that of Type IV major fimbrial protein FimA (fimA) from Dichelobacter nodosus (Bacteroides nodosus).